The chain runs to 486 residues: Malonate-semialdehyde dehydrogenase (486 aa).

F154, K178, E181, R182, and S231 together coordinate NAD(+). The active-site Nucleophile is C286. E386 contacts NAD(+).

Belongs to the aldehyde dehydrogenase family. IolA subfamily. Homotetramer.

The enzyme catalyses 3-oxopropanoate + NAD(+) + CoA + H2O = hydrogencarbonate + acetyl-CoA + NADH + H(+). The catalysed reaction is 2-methyl-3-oxopropanoate + NAD(+) + CoA + H2O = propanoyl-CoA + hydrogencarbonate + NADH + H(+). Its pathway is polyol metabolism; myo-inositol degradation into acetyl-CoA; acetyl-CoA from myo-inositol: step 7/7. In terms of biological role, catalyzes the oxidation of malonate semialdehyde (MSA) and methylmalonate semialdehyde (MMSA) into acetyl-CoA and propanoyl-CoA, respectively. Is involved in a myo-inositol catabolic pathway. Bicarbonate, and not CO2, is the end-product of the enzymatic reaction. This chain is Malonate-semialdehyde dehydrogenase, found in Bacillus cereus (strain G9842).